We begin with the raw amino-acid sequence, 252 residues long: Putative zinc finger CCCH domain-containing protein 58 (252 aa).

A C3H1-type zinc finger spans residues 35–62 (NHKSVLCMKWREGRCHNGVACRYAHGEE). 3 disordered regions span residues 71 to 95 (RVGGGGTSMHARSSPPRDGASSGST), 109 to 180 (RHGR…SAAD), and 215 to 252 (TATSEPSATSDDDAITTTTSSSTTDADELDAAVAAPPK). Low complexity-rich tracts occupy residues 133–149 (SARSTAPTPPRAHTTPP) and 229–238 (ITTTTSSSTT).

The sequence is that of Putative zinc finger CCCH domain-containing protein 58 from Oryza sativa subsp. japonica (Rice).